Here is a 588-residue protein sequence, read N- to C-terminus: Calicin (588 aa).

The BTB domain occupies 12 to 124 (SFVLQNLNRQ…RLRVHCNDFL (113 aa)). In terms of domain architecture, BACK spans 133 to 235 (CLRYLFLAEL…NAVSNKTLVF (103 aa)). Residue Ser-149 is modified to Phosphoserine. Kelch repeat units follow at residues 280-327 (SVVI…SAGR), 328-375 (YIYI…TCGG), 377-423 (VYSV…TKGD), 425-475 (HLYI…SFQQ), 476-525 (DNIL…IGDS), and 526-580 (KVFV…LAKL).

Interacts with CYLC1; the interaction may be relevant for proper acrosome attachment to the nuclear envelope. In terms of tissue distribution, expressed in testis, in spermatozoa (at protein level).

It localises to the cytoplasm. Its subcellular location is the cytoskeleton. The protein resides in the perinuclear theca. It is found in the calyx. Its function is as follows. Required for both nuclear and acrosomal shaping during spermiogenesis. The chain is Calicin (CCIN) from Homo sapiens (Human).